Reading from the N-terminus, the 26-residue chain is Mitochondrial import receptor subunit TOM7-2 (26 aa).

It belongs to the Tom7 family. As to quaternary structure, forms part of the preprotein translocase complex of the outer mitochondrial membrane (TOM complex).

The protein resides in the mitochondrion outer membrane. In terms of biological role, seems to act as a modulator of the dynamics of the mitochondrial protein transport machinery. Seems to promote the dissociation of subunits of the outer membrane translocase. The protein is Mitochondrial import receptor subunit TOM7-2 (TOM7-2) of Solanum tuberosum (Potato).